Consider the following 557-residue polypeptide: Fatty acyl-CoA hydrolase precursor, medium chain (557 aa).

The N-terminal stretch at 1–25 (MATEKNTLLSLILTAGITALVATGQ) is a signal peptide. C93 and C122 are joined by a disulfide. The active-site Acyl-ester intermediate is the S227. Active-site charge relay system residues include E345 and H460. An N-linked (GlcNAc...) asparagine glycan is attached at N476.

The protein belongs to the type-B carboxylesterase/lipase family. As to expression, highest levels in uropygial gland, much lower in liver and kidney.

Fatty acid biosynthesis chain termination and release of the free fatty acid product is achieved by hydrolysis of the thio ester by a thioesterase. This thioesterase may be associated with peroxisome proliferation and may play a role in the production of 3-hydroxy fatty acid diester pheromones. This is Fatty acyl-CoA hydrolase precursor, medium chain from Anas platyrhynchos (Mallard).